The primary structure comprises 525 residues: MHRAPSPTAEQPPGGGDSARRTLQPRLKPSARAMALPRTLGELQLYRVLQRANLLSYYETFIQQGGDDVQQLCEAGEEEFLEIMALVGMATKPLHVRRLQKALREWATNPGLFSQPVPAVPVSSIPLFKISETAGTRKGSMSNGHGSPGEKAGSARSFSPKSPLELGEKLSPLPGGPGAGDPRIWPGRSTPESDVGAGGEEEAGSPPFSPPAGGGVPEGTGAGGLAAGGTGGGPDRLEPEMVRMVVESVERIFRSFPRGDAGEVTSLLKLNKKLARSVGHIFEMDDNDSQKEEEIRKYSIIYGRFDSKRREGKQLSLHELTINEAAAQFCMRDNTLLLRRVELFSLSRQVARESTYLSSLKGSRLHPEELGGPPLKKLKQEVGEQSHPEIQQPPPGPESYVPPYRPSLEEDSASLSGESLDGHLQAVGSCPRLTPPPADLPLALPAHGLWSRHILQQTLMDEGLRLARLVSHDRVGRLSPCVPAKPPLAEFEEGLLDRCPAPGPHPALVEGRRSSVKVEAEASRQ.

Residues 1–22 (MHRAPSPTAEQPPGGGDSARRT) form a disordered region. S6 carries the phosphoserine modification. Residues 35–113 (ALPRTLGELQ…REWATNPGLF (79 aa)) form an NCD1 region. The interval 135–237 (GTRKGSMSNG…GGTGGGPDRL (103 aa)) is disordered. S157, S159, S162, and S171 each carry phosphoserine. Residues 212–234 (AGGGVPEGTGAGGLAAGGTGGGP) are compositionally biased toward gly residues. The segment at 267-356 (LLKLNKKLAR…SRQVARESTY (90 aa)) is NCD2. Residues 353–384 (ESTYLSSLKGSRLHPEELGGPPLKKLKQEVGE) are necessary for nuclear localization. K379 participates in a covalent cross-link: Glycyl lysine isopeptide (Lys-Gly) (interchain with G-Cter in SUMO1). The segment at 380–416 (QEVGEQSHPEIQQPPPGPESYVPPYRPSLEEDSASLS) is disordered. Residue S479 is modified to Phosphoserine. The tract at residues 502–525 (PGPHPALVEGRRSSVKVEAEASRQ) is disordered. Residues 510–525 (EGRRSSVKVEAEASRQ) show a composition bias toward basic and acidic residues. K517 is covalently cross-linked (Glycyl lysine isopeptide (Lys-Gly) (interchain with G-Cter in SUMO1); alternate). A Glycyl lysine isopeptide (Lys-Gly) (interchain with G-Cter in SUMO2); alternate cross-link involves residue K517.

This sequence belongs to the NAB family. Homomultimers may associate with EGR1 bound to DNA. Sumoylation by EGR2 represses EGR2 transcriptional activity in hindbrain. In terms of tissue distribution, widely expressed at low levels. Highly expressed in melanoma cell lines.

Its subcellular location is the nucleus. Its function is as follows. Acts as a transcriptional repressor for zinc finger transcription factors EGR1 and EGR2. Isoform 2 lacks repression ability. The protein is NGFI-A-binding protein 2 (NAB2) of Homo sapiens (Human).